The chain runs to 363 residues: tRNA/tmRNA (uracil-C(5))-methyltransferase (363 aa).

Gln-187, Tyr-215, Asn-220, Glu-236, and Asp-296 together coordinate S-adenosyl-L-methionine. Cys-321 (nucleophile) is an active-site residue. The active-site Proton acceptor is Glu-355.

It belongs to the class I-like SAM-binding methyltransferase superfamily. RNA M5U methyltransferase family. TrmA subfamily.

The catalysed reaction is uridine(54) in tRNA + S-adenosyl-L-methionine = 5-methyluridine(54) in tRNA + S-adenosyl-L-homocysteine + H(+). The enzyme catalyses uridine(341) in tmRNA + S-adenosyl-L-methionine = 5-methyluridine(341) in tmRNA + S-adenosyl-L-homocysteine + H(+). In terms of biological role, dual-specificity methyltransferase that catalyzes the formation of 5-methyluridine at position 54 (m5U54) in all tRNAs, and that of position 341 (m5U341) in tmRNA (transfer-mRNA). The sequence is that of tRNA/tmRNA (uracil-C(5))-methyltransferase from Pseudomonas paraeruginosa (strain DSM 24068 / PA7) (Pseudomonas aeruginosa (strain PA7)).